A 744-amino-acid chain; its full sequence is Leukocyte immunoglobulin-like receptor subfamily B member 3A (744 aa).

A signal peptide spans 1–24 (MTFTFTALLCLGLTLGLWIPVLTG). At 25–543 (SLPKPILRVQ…PPDGLQRYLK (519 aa)) the chain is on the extracellular side. Ig-like C2-type domains follow at residues 26-119 (LPKP…VVTG), 121-221 (YSKP…LVSG), 223-316 (LQKP…VVTG), 320-419 (YHPL…LITG), and 426-520 (FLSV…IVSG). Intrachain disulfides connect C49–C98, C144–C197, and C246–C295. N-linked (GlcNAc...) asparagine glycosylation is present at N79. A glycan (N-linked (GlcNAc...) asparagine) is linked at N338. C343 and C395 are oxidised to a cystine. N-linked (GlcNAc...) asparagine glycosylation is present at N440. Cysteines 445 and 496 form a disulfide. The helical transmembrane segment at 544 to 564 (ALIGVSVAFLLFLFILIFILL) threads the bilayer. The Cytoplasmic portion of the chain corresponds to 565-744 (RRRHQEKFRK…PGAVPKNKKQ (180 aa)). Residues 572–584 (FRKDDEDAQKGKE) show a composition bias toward basic and acidic residues. Disordered stretches follow at residues 572-617 (FRKD…ESLY), 630-652 (ELDTWKPPEGDPQGETYAQVEPS), and 667-744 (EQLN…NKKQ). Positions 615–620 (SLYASV) match the ITIM motif 1 motif. Short sequence motifs (ITIM motif) lie at residues 695 to 700 (VTYAQL) and 725 to 730 (SVYAAL). Phosphotyrosine; by LYN is present on residues Y697 and Y727.

As to quaternary structure, interacts with LYN, PTPN6/SHP-1 and PTPN11/SHP-2. In terms of processing, phosphorylated on tyrosine residues by LYN. Phosphorylation at Tyr-697 and Tyr-727 is important for interaction with PTPN6/SHP-1 and PTPN11/SHP-2.

The protein resides in the cell membrane. May act as receptor for class I MHC antigens. Becomes activated upon coligation with immune receptors, such as FCGR2B and the B-cell receptor. Down-regulates antigen-induced B-cell activation by recruiting phosphatases to its immunoreceptor tyrosine-based inhibitor motifs (ITIM). This Rattus norvegicus (Rat) protein is Leukocyte immunoglobulin-like receptor subfamily B member 3A.